Here is a 148-residue protein sequence, read N- to C-terminus: Cytochrome c-type biogenesis protein CcmE (148 aa).

Residues 1–7 (MKPRHKK) lie on the Cytoplasmic side of the membrane. A helical; Signal-anchor for type II membrane protein membrane pass occupies residues 8 to 28 (LAIIASSVTALGVASVLVLNA). At 29 to 148 (FQSNLVFFFS…ADKARKTVMQ (120 aa)) the chain is on the periplasmic side. H123 and Y127 together coordinate heme.

It belongs to the CcmE/CycJ family.

It is found in the cell inner membrane. In terms of biological role, heme chaperone required for the biogenesis of c-type cytochromes. Transiently binds heme delivered by CcmC and transfers the heme to apo-cytochromes in a process facilitated by CcmF and CcmH. This chain is Cytochrome c-type biogenesis protein CcmE, found in Nitrosospira multiformis (strain ATCC 25196 / NCIMB 11849 / C 71).